Reading from the N-terminus, the 530-residue chain is Autoinducer-2 kinase (530 aa).

Belongs to the FGGY kinase family.

Its subcellular location is the cytoplasm. It catalyses the reaction (S)-4,5-dihydroxypentane-2,3-dione + ATP = (2S)-2-hydroxy-3,4-dioxopentyl phosphate + ADP + H(+). Catalyzes the phosphorylation of autoinducer-2 (AI-2) to phospho-AI-2, which subsequently inactivates the transcriptional regulator LsrR and leads to the transcription of the lsr operon. Phosphorylates the ring-open form of (S)-4,5-dihydroxypentane-2,3-dione (DPD), which is the precursor to all AI-2 signaling molecules, at the C5 position. The protein is Autoinducer-2 kinase of Salmonella paratyphi A (strain ATCC 9150 / SARB42).